A 185-amino-acid chain; its full sequence is Putative manganese efflux pump MntP (185 aa).

The next 6 helical transmembrane spans lie at 4–24 (LLLS…SVSL), 43–63 (IFFG…GVPI), 67–87 (IDPF…GKMI), 107–127 (LLLA…FALI), 131–151 (VLLP…FGVL), and 165–185 (QILG…EYCL).

The protein belongs to the MntP (TC 9.B.29) family.

Its subcellular location is the cell membrane. Its function is as follows. Probably functions as a manganese efflux pump. This chain is Putative manganese efflux pump MntP, found in Methanocorpusculum labreanum (strain ATCC 43576 / DSM 4855 / Z).